The primary structure comprises 160 residues: Cytochrome b6-f complex subunit 4 (160 aa).

Transmembrane regions (helical) follow at residues Leu36–Val56, Leu95–Glu115, and Val131–Ile151.

Belongs to the cytochrome b family. PetD subfamily. As to quaternary structure, the 4 large subunits of the cytochrome b6-f complex are cytochrome b6, subunit IV (17 kDa polypeptide, PetD), cytochrome f and the Rieske protein, while the 4 small subunits are PetG, PetL, PetM and PetN. The complex functions as a dimer.

The protein resides in the cellular thylakoid membrane. Its function is as follows. Component of the cytochrome b6-f complex, which mediates electron transfer between photosystem II (PSII) and photosystem I (PSI), cyclic electron flow around PSI, and state transitions. This chain is Cytochrome b6-f complex subunit 4, found in Prochlorococcus marinus (strain MIT 9515).